A 411-amino-acid polypeptide reads, in one-letter code: Methylthioribose-1-phosphate isomerase (411 aa).

Ser-2 carries the post-translational modification N-acetylserine. Asp-280 (proton donor) is an active-site residue. Ser-351 is modified (phosphoserine).

This sequence belongs to the eIF-2B alpha/beta/delta subunits family. MtnA subfamily. Homodimer.

The protein localises to the cytoplasm. Its subcellular location is the nucleus. The catalysed reaction is 5-(methylsulfanyl)-alpha-D-ribose 1-phosphate = 5-(methylsulfanyl)-D-ribulose 1-phosphate. The protein operates within amino-acid biosynthesis; L-methionine biosynthesis via salvage pathway; L-methionine from S-methyl-5-thio-alpha-D-ribose 1-phosphate: step 1/6. Its function is as follows. Catalyzes the interconversion of methylthioribose-1-phosphate (MTR-1-P) into methylthioribulose-1-phosphate (MTRu-1-P). The sequence is that of Methylthioribose-1-phosphate isomerase from Saccharomyces cerevisiae (strain RM11-1a) (Baker's yeast).